The sequence spans 145 residues: Ribosomal RNA large subunit methyltransferase H (145 aa).

S-adenosyl-L-methionine-binding positions include L62, G94, and 113–118 (LGQLTL).

The protein belongs to the RNA methyltransferase RlmH family. As to quaternary structure, homodimer.

It is found in the cytoplasm. The enzyme catalyses pseudouridine(1915) in 23S rRNA + S-adenosyl-L-methionine = N(3)-methylpseudouridine(1915) in 23S rRNA + S-adenosyl-L-homocysteine + H(+). Specifically methylates the pseudouridine at position 1915 (m3Psi1915) in 23S rRNA. In Deinococcus deserti (strain DSM 17065 / CIP 109153 / LMG 22923 / VCD115), this protein is Ribosomal RNA large subunit methyltransferase H.